The primary structure comprises 444 residues: C4-dicarboxylate transport protein (444 aa).

The next 9 membrane-spanning stretches (helical) occupy residues 15–35, 46–66, 78–98, 143–163, 199–219, 224–244, 291–311, 332–352, and 354–374; these read VIVAICIGIALGHYYPQFGVA, LIKMIIAPIIFCTVVSGIAGM, YALLYFEIVSTIALLVGLIVV, IVGAFATGDILQVLMFSVIFG, PIGAFGAMAFTIGAYGVGSLV, LMICFYITCLAFILIVLGGIA, VVGLVIPTGYSFNLDGTAIYL, ITLLVVLLLSSKGAAGVTGSG, and IVLAATLSAVGHLPVAGLALI. The interval 422–444 is disordered; that stretch reads GIADTRPEDDLGVAEGPTPSNVK.

This sequence belongs to the dicarboxylate/amino acid:cation symporter (DAACS) (TC 2.A.23) family.

The protein localises to the cell inner membrane. Functionally, responsible for the transport of dicarboxylates such as succinate, fumarate, and malate from the periplasm across the membrane. This is C4-dicarboxylate transport protein from Pseudomonas fluorescens (strain Pf0-1).